We begin with the raw amino-acid sequence, 192 residues long: uncharacterized protein (192 aa).

Disordered regions lie at residues 1–37 and 146–192; these read MASS…PAFP and ARGP…EQNK. Pro residues-rich tracts occupy residues 8 to 19 and 159 to 180; these read TPSPAGLPPPSV and APPP…PGWP.

This is an uncharacterized protein from Homo sapiens (Human).